The sequence spans 365 residues: Phospho-N-acetylmuramoyl-pentapeptide-transferase (365 aa).

10 consecutive transmembrane segments (helical) span residues 22–42 (YISV…LALG), 74–94 (TMGG…WGNL), 95–115 (TSIY…IGFF), 134–154 (KFAL…YLLS), 168–188 (SLYI…IING), 201–221 (GLAI…AYIE), 240–260 (LAEV…FLWF), 267–287 (VFMG…IAVM), 292–312 (LIFF…MLQV), and 342–362 (KVVI…FAAI).

Belongs to the glycosyltransferase 4 family. MraY subfamily. Mg(2+) is required as a cofactor.

The protein localises to the cell inner membrane. It carries out the reaction UDP-N-acetyl-alpha-D-muramoyl-L-alanyl-gamma-D-glutamyl-meso-2,6-diaminopimeloyl-D-alanyl-D-alanine + di-trans,octa-cis-undecaprenyl phosphate = di-trans,octa-cis-undecaprenyl diphospho-N-acetyl-alpha-D-muramoyl-L-alanyl-D-glutamyl-meso-2,6-diaminopimeloyl-D-alanyl-D-alanine + UMP. Its pathway is cell wall biogenesis; peptidoglycan biosynthesis. Catalyzes the initial step of the lipid cycle reactions in the biosynthesis of the cell wall peptidoglycan: transfers peptidoglycan precursor phospho-MurNAc-pentapeptide from UDP-MurNAc-pentapeptide onto the lipid carrier undecaprenyl phosphate, yielding undecaprenyl-pyrophosphoryl-MurNAc-pentapeptide, known as lipid I. The sequence is that of Phospho-N-acetylmuramoyl-pentapeptide-transferase from Francisella tularensis subsp. holarctica (strain OSU18).